Here is a 400-residue protein sequence, read N- to C-terminus: Nicotinate phosphoribosyltransferase (400 aa).

Histidine 220 bears the Phosphohistidine; by autocatalysis mark.

It belongs to the NAPRTase family. Transiently phosphorylated on a His residue during the reaction cycle. Phosphorylation strongly increases the affinity for substrates and increases the rate of nicotinate D-ribonucleotide production. Dephosphorylation regenerates the low-affinity form of the enzyme, leading to product release.

It catalyses the reaction nicotinate + 5-phospho-alpha-D-ribose 1-diphosphate + ATP + H2O = nicotinate beta-D-ribonucleotide + ADP + phosphate + diphosphate. The protein operates within cofactor biosynthesis; NAD(+) biosynthesis; nicotinate D-ribonucleotide from nicotinate: step 1/1. Its function is as follows. Catalyzes the synthesis of beta-nicotinate D-ribonucleotide from nicotinate and 5-phospho-D-ribose 1-phosphate at the expense of ATP. In Shigella dysenteriae serotype 1 (strain Sd197), this protein is Nicotinate phosphoribosyltransferase.